The chain runs to 302 residues: Digeranylgeranylglyceryl phosphate synthase (302 aa).

A run of 8 helical transmembrane segments spans residues 21–41 (LVVA…IYGG), 43–63 (IVSS…AGGY), 103–123 (IGLI…FAVL), 144–164 (IVIA…ASCM), 167–187 (GKVV…LLVL), 218–238 (AYMA…FPYI), 244–264 (MAYL…LAIL), and 282–302 (ARSA…AGLM).

The protein belongs to the UbiA prenyltransferase family. DGGGP synthase subfamily. Requires Mg(2+) as cofactor.

The protein localises to the cell membrane. The catalysed reaction is sn-3-O-(geranylgeranyl)glycerol 1-phosphate + (2E,6E,10E)-geranylgeranyl diphosphate = 2,3-bis-O-(geranylgeranyl)-sn-glycerol 1-phosphate + diphosphate. It functions in the pathway membrane lipid metabolism; glycerophospholipid metabolism. Its function is as follows. Prenyltransferase that catalyzes the transfer of the geranylgeranyl moiety of geranylgeranyl diphosphate (GGPP) to the C2 hydroxyl of (S)-3-O-geranylgeranylglyceryl phosphate (GGGP). This reaction is the second ether-bond-formation step in the biosynthesis of archaeal membrane lipids. In Hyperthermus butylicus (strain DSM 5456 / JCM 9403 / PLM1-5), this protein is Digeranylgeranylglyceryl phosphate synthase.